The sequence spans 670 residues: DNA ligase (670 aa).

NAD(+) is bound by residues 33–37 (DAEYD), 82–83 (SL), and Glu114. Lys116 functions as the N6-AMP-lysine intermediate in the catalytic mechanism. NAD(+) contacts are provided by Arg137, Glu174, Lys291, and Lys315. Positions 409, 412, 427, and 433 each coordinate Zn(2+). A BRCT domain is found at 593–670 (GAELPLEGKT…TEQDLLELIN (78 aa)).

It belongs to the NAD-dependent DNA ligase family. LigA subfamily. The cofactor is Mg(2+). Requires Mn(2+) as cofactor.

The enzyme catalyses NAD(+) + (deoxyribonucleotide)n-3'-hydroxyl + 5'-phospho-(deoxyribonucleotide)m = (deoxyribonucleotide)n+m + AMP + beta-nicotinamide D-nucleotide.. Functionally, DNA ligase that catalyzes the formation of phosphodiester linkages between 5'-phosphoryl and 3'-hydroxyl groups in double-stranded DNA using NAD as a coenzyme and as the energy source for the reaction. It is essential for DNA replication and repair of damaged DNA. The protein is DNA ligase of Vibrio parahaemolyticus serotype O3:K6 (strain RIMD 2210633).